Reading from the N-terminus, the 364-residue chain is F-box protein At1g59680 (364 aa).

An F-box domain is found at T2–A49.

The sequence is that of F-box protein At1g59680 from Arabidopsis thaliana (Mouse-ear cress).